The sequence spans 343 residues: Glucokinase (343 aa).

Residue 18–23 (GDIGGT) coordinates ATP.

It belongs to the bacterial glucokinase family.

It is found in the cytoplasm. The enzyme catalyses D-glucose + ATP = D-glucose 6-phosphate + ADP + H(+). This chain is Glucokinase, found in Brucella suis biovar 1 (strain 1330).